The primary structure comprises 104 residues: Met repressor (104 aa).

It belongs to the MetJ family. Homodimer.

The protein resides in the cytoplasm. In terms of biological role, this regulatory protein, when combined with SAM (S-adenosylmethionine) represses the expression of the methionine regulon and of enzymes involved in SAM synthesis. The sequence is that of Met repressor from Shewanella oneidensis (strain ATCC 700550 / JCM 31522 / CIP 106686 / LMG 19005 / NCIMB 14063 / MR-1).